A 180-amino-acid polypeptide reads, in one-letter code: ADP-ribosylation factor 1 (180 aa).

Gly2 carries N-myristoyl glycine lipidation. GTP contacts are provided by residues 24 to 31 (GLDAAGKT), 67 to 71 (DVGGQ), and 126 to 129 (NKQD).

Belongs to the small GTPase superfamily. Arf family.

The protein localises to the golgi apparatus. It carries out the reaction GTP + H2O = GDP + phosphate + H(+). In terms of biological role, GTP-binding protein involved in protein trafficking; may modulate vesicle budding and uncoating within the Golgi apparatus. This is ADP-ribosylation factor 1 (arf1) from Schizosaccharomyces pombe (strain 972 / ATCC 24843) (Fission yeast).